The chain runs to 230 residues: Small ribosomal subunit protein uS3 (230 aa).

A KH type-2 domain is found at 39 to 107 (VRKYLADKLQ…PAQINIAEIR (69 aa)).

It belongs to the universal ribosomal protein uS3 family. As to quaternary structure, part of the 30S ribosomal subunit. Forms a tight complex with proteins S10 and S14.

In terms of biological role, binds the lower part of the 30S subunit head. Binds mRNA in the 70S ribosome, positioning it for translation. The sequence is that of Small ribosomal subunit protein uS3 from Shewanella oneidensis (strain ATCC 700550 / JCM 31522 / CIP 106686 / LMG 19005 / NCIMB 14063 / MR-1).